The sequence spans 403 residues: Tryptophan synthase beta chain (403 aa).

The residue at position 96 (Lys-96) is an N6-(pyridoxal phosphate)lysine.

Belongs to the TrpB family. In terms of assembly, tetramer of two alpha and two beta chains. Pyridoxal 5'-phosphate serves as cofactor.

The catalysed reaction is (1S,2R)-1-C-(indol-3-yl)glycerol 3-phosphate + L-serine = D-glyceraldehyde 3-phosphate + L-tryptophan + H2O. Its pathway is amino-acid biosynthesis; L-tryptophan biosynthesis; L-tryptophan from chorismate: step 5/5. In terms of biological role, the beta subunit is responsible for the synthesis of L-tryptophan from indole and L-serine. The protein is Tryptophan synthase beta chain of Ralstonia nicotianae (strain ATCC BAA-1114 / GMI1000) (Ralstonia solanacearum).